Reading from the N-terminus, the 226-residue chain is Lysoplasmalogenase TMEM86B (226 aa).

Topologically, residues 1–23 (MDAGKAGQTLKTHCSAQRPDVCR) are cytoplasmic. A helical membrane pass occupies residues 24 to 40 (WLSPFILSCCVYFCLWI). Residues 41 to 46 (PEDQLS) are Extracellular-facing. The chain crosses the membrane as a helical span at residues 47-67 (WFAALVKCLPVLCLAGFLWVM). The Cytoplasmic portion of the chain corresponds to 68 to 75 (SPSGGYTQ). Residues 76–93 (LLQGALVCSAVGDACLIW) form a helical membrane-spanning segment. Topologically, residues 94-100 (PAAFVPG) are extracellular. A helical membrane pass occupies residues 101 to 117 (MAAFATAHLLYVWAFGF). Over 118–123 (SPLQPG) the chain is Cytoplasmic. Residues 124-140 (LLLLIILAPGPYLSLVL) traverse the membrane as a helical segment. The Extracellular portion of the chain corresponds to 141–146 (QHLEPD). A helical membrane pass occupies residues 147-163 (MVLPVAAYGLILMAMLW). Residues 164 to 171 (RGLAQGGS) are Cytoplasmic-facing. Residues 172-188 (AGWGALLFTLSDGVLAW) traverse the membrane as a helical segment. The Extracellular segment spans residues 189–199 (DTFAQPLPHAH). Residues 200-218 (LVIMTTYYAAQLLITLSAL) traverse the membrane as a helical segment. At 219–226 (RSPVPKTD) the chain is on the cytoplasmic side.

This sequence belongs to the TMEM86 family. Homodimer.

The protein localises to the endoplasmic reticulum membrane. It localises to the cytoplasm. The catalysed reaction is a 1-O-(1Z-alkenyl)-sn-glycero-3-phosphocholine + H2O = a 2,3-saturated aldehyde + sn-glycerol 3-phosphocholine. It carries out the reaction a 1-O-(1Z-alkenyl)-sn-glycero-3-phosphoethanolamine + H2O = a 2,3-saturated aldehyde + sn-glycero-3-phosphoethanolamine. Competitively inhibited by lysophosphatidic acid. Catalyzes the hydrolysis of the vinyl ether bond of choline or ethanolamine lysoplasmalogens, forming fatty aldehyde and glycerophosphocholine or glycerophosphoethanolamine, respectively and is specific for the sn-2-deacylated (lyso) form of plasmalogen. This Homo sapiens (Human) protein is Lysoplasmalogenase TMEM86B (TMEM86B).